Here is an 892-residue protein sequence, read N- to C-terminus: Major core protein OPG136 precursor (892 aa).

The propeptide occupies 616–698; it reads SPEGEETIIC…ILDRIITNAG (83 aa).

The protein belongs to the orthopxvirus protein OPG136 family. As to quaternary structure, interacts with P39/A4. The precursor is cleaved by OPG083 to give rise to the 62 kDa mature protein during virion maturation. Proteolytic cleavage of major core proteins OPG136, OPG129, and OPG098, which occurs at a late stage of core formation, is required for production of infectious mature virions (MV).

The protein localises to the virion. In terms of biological role, core protein 4a is the most abundant virion protein. Major component of the virion core that undergoes proteolytic processing during the immature virion (IV) to mature virion (MV) transition. The polypeptide is Major core protein OPG136 precursor (OPG136) (Homo sapiens (Human)).